Consider the following 306-residue polypeptide: Curved DNA-binding protein (306 aa).

The J domain maps to 5–69; that stretch reads DYYAIMGVKP…QRRAEYDQMW (65 aa).

The protein resides in the cytoplasm. Its subcellular location is the nucleoid. Its function is as follows. DNA-binding protein that preferentially recognizes a curved DNA sequence. It is probably a functional analog of DnaJ; displays overlapping activities with DnaJ, but functions under different conditions, probably acting as a molecular chaperone in an adaptive response to environmental stresses other than heat shock. Lacks autonomous chaperone activity; binds native substrates and targets them for recognition by DnaK. Its activity is inhibited by the binding of CbpM. This is Curved DNA-binding protein from Shigella sonnei (strain Ss046).